Here is a 189-residue protein sequence, read N- to C-terminus: MYLVVGLGNIGKEYKKTRHNIGFDVVDIVAEKYNIEINRQKFKGSYGEGRIGNEKIILLKPSTYMNLSGESVIEAANFYKIDKENIIVIYDDMSIDIGKLRVRGKGSAGGHNGIKNIIQHLNSDIFPRVRVGIGQPDENVVNYVLGKFSKDQREVIEKVLAMSAKACISIVEDGVTEAMNKYNGVKIEV.

Residue Tyr-14 coordinates tRNA. His-19 serves as the catalytic Proton acceptor. The tRNA site is built by Tyr-64, Asn-66, and Asn-112.

The protein belongs to the PTH family. As to quaternary structure, monomer.

It localises to the cytoplasm. The catalysed reaction is an N-acyl-L-alpha-aminoacyl-tRNA + H2O = an N-acyl-L-amino acid + a tRNA + H(+). Functionally, hydrolyzes ribosome-free peptidyl-tRNAs (with 1 or more amino acids incorporated), which drop off the ribosome during protein synthesis, or as a result of ribosome stalling. In terms of biological role, catalyzes the release of premature peptidyl moieties from peptidyl-tRNA molecules trapped in stalled 50S ribosomal subunits, and thus maintains levels of free tRNAs and 50S ribosomes. This is Peptidyl-tRNA hydrolase from Clostridium botulinum (strain Loch Maree / Type A3).